Reading from the N-terminus, the 849-residue chain is Alanine--tRNA ligase (849 aa).

Zn(2+)-binding residues include H551, H555, C653, and H657.

This sequence belongs to the class-II aminoacyl-tRNA synthetase family. Requires Zn(2+) as cofactor.

It localises to the cytoplasm. It carries out the reaction tRNA(Ala) + L-alanine + ATP = L-alanyl-tRNA(Ala) + AMP + diphosphate. Its function is as follows. Catalyzes the attachment of alanine to tRNA(Ala) in a two-step reaction: alanine is first activated by ATP to form Ala-AMP and then transferred to the acceptor end of tRNA(Ala). Also edits incorrectly charged Ser-tRNA(Ala) and Gly-tRNA(Ala) via its editing domain. This Sulfurimonas denitrificans (strain ATCC 33889 / DSM 1251) (Thiomicrospira denitrificans (strain ATCC 33889 / DSM 1251)) protein is Alanine--tRNA ligase.